Here is a 738-residue protein sequence, read N- to C-terminus: Phosphoribosylformylglycinamidine synthase subunit PurL (738 aa).

His-41 is a catalytic residue. Positions 44 and 83 each coordinate ATP. Position 85 (Glu-85) interacts with Mg(2+). Residues 86–89 (SHNH) and Arg-108 contribute to the substrate site. His-87 functions as the Proton acceptor in the catalytic mechanism. A Mg(2+)-binding site is contributed by Asp-109. Gln-233 provides a ligand contact to substrate. Position 261 (Asp-261) interacts with Mg(2+). 305-307 (ESQ) serves as a coordination point for substrate. Asp-490 and Gly-527 together coordinate ATP. Asn-528 lines the Mg(2+) pocket. Residue Ser-530 participates in substrate binding.

This sequence belongs to the FGAMS family. As to quaternary structure, monomer. Part of the FGAM synthase complex composed of 1 PurL, 1 PurQ and 2 PurS subunits.

It is found in the cytoplasm. It catalyses the reaction N(2)-formyl-N(1)-(5-phospho-beta-D-ribosyl)glycinamide + L-glutamine + ATP + H2O = 2-formamido-N(1)-(5-O-phospho-beta-D-ribosyl)acetamidine + L-glutamate + ADP + phosphate + H(+). It participates in purine metabolism; IMP biosynthesis via de novo pathway; 5-amino-1-(5-phospho-D-ribosyl)imidazole from N(2)-formyl-N(1)-(5-phospho-D-ribosyl)glycinamide: step 1/2. Its function is as follows. Part of the phosphoribosylformylglycinamidine synthase complex involved in the purines biosynthetic pathway. Catalyzes the ATP-dependent conversion of formylglycinamide ribonucleotide (FGAR) and glutamine to yield formylglycinamidine ribonucleotide (FGAM) and glutamate. The FGAM synthase complex is composed of three subunits. PurQ produces an ammonia molecule by converting glutamine to glutamate. PurL transfers the ammonia molecule to FGAR to form FGAM in an ATP-dependent manner. PurS interacts with PurQ and PurL and is thought to assist in the transfer of the ammonia molecule from PurQ to PurL. This is Phosphoribosylformylglycinamidine synthase subunit PurL from Alkaliphilus metalliredigens (strain QYMF).